The primary structure comprises 208 residues: Ribosomal RNA small subunit methyltransferase J (208 aa).

S-adenosyl-L-methionine-binding positions include Arg-54 to Asp-55, Glu-70 to Arg-71, and Asp-122.

It belongs to the methyltransferase superfamily. RsmJ family.

Its subcellular location is the cytoplasm. The enzyme catalyses guanosine(1516) in 16S rRNA + S-adenosyl-L-methionine = N(2)-methylguanosine(1516) in 16S rRNA + S-adenosyl-L-homocysteine + H(+). In terms of biological role, specifically methylates the guanosine in position 1516 of 16S rRNA. This chain is Ribosomal RNA small subunit methyltransferase J, found in Agrobacterium fabrum (strain C58 / ATCC 33970) (Agrobacterium tumefaciens (strain C58)).